A 394-amino-acid polypeptide reads, in one-letter code: Shematrin-like protein 2 (394 aa).

The signal sequence occupies residues 1-19 (MKPFISLASLIVLIASASA).

Prismatic layer of shell (at protein level). Expressed primarily in the mantle with highest level in the mantle edge and lower level in the mantle pallium.

Its subcellular location is the secreted. In Pinctada maxima (Silver-lipped pearl oyster), this protein is Shematrin-like protein 2.